The primary structure comprises 78 residues: Acyl carrier protein (78 aa).

Positions serine 2–glutamine 77 constitute a Carrier domain. Serine 37 bears the O-(pantetheine 4'-phosphoryl)serine mark.

Belongs to the acyl carrier protein (ACP) family. 4'-phosphopantetheine is transferred from CoA to a specific serine of apo-ACP by AcpS. This modification is essential for activity because fatty acids are bound in thioester linkage to the sulfhydryl of the prosthetic group.

Its subcellular location is the cytoplasm. It participates in lipid metabolism; fatty acid biosynthesis. In terms of biological role, carrier of the growing fatty acid chain in fatty acid biosynthesis. This chain is Acyl carrier protein, found in Pseudomonas putida (strain ATCC 700007 / DSM 6899 / JCM 31910 / BCRC 17059 / LMG 24140 / F1).